We begin with the raw amino-acid sequence, 501 residues long: Probable cytosol aminopeptidase (501 aa).

Mn(2+)-binding residues include Lys270 and Asp275. Residue Lys282 is part of the active site. Positions 293, 352, and 354 each coordinate Mn(2+). Residue Arg356 is part of the active site.

The protein belongs to the peptidase M17 family. Mn(2+) is required as a cofactor.

Its subcellular location is the cytoplasm. It carries out the reaction Release of an N-terminal amino acid, Xaa-|-Yaa-, in which Xaa is preferably Leu, but may be other amino acids including Pro although not Arg or Lys, and Yaa may be Pro. Amino acid amides and methyl esters are also readily hydrolyzed, but rates on arylamides are exceedingly low.. The enzyme catalyses Release of an N-terminal amino acid, preferentially leucine, but not glutamic or aspartic acids.. Functionally, presumably involved in the processing and regular turnover of intracellular proteins. Catalyzes the removal of unsubstituted N-terminal amino acids from various peptides. The protein is Probable cytosol aminopeptidase of Wigglesworthia glossinidia brevipalpis.